Reading from the N-terminus, the 166-residue chain is FMN reductase (NADH) RutF (166 aa).

It belongs to the non-flavoprotein flavin reductase family. RutF subfamily.

It carries out the reaction FMNH2 + NAD(+) = FMN + NADH + 2 H(+). Functionally, catalyzes the reduction of FMN to FMNH2 which is used to reduce pyrimidine by RutA via the Rut pathway. This chain is FMN reductase (NADH) RutF, found in Cronobacter turicensis (strain DSM 18703 / CCUG 55852 / LMG 23827 / z3032).